Consider the following 81-residue polypeptide: Large ribosomal subunit protein bL31 (81 aa).

This sequence belongs to the bacterial ribosomal protein bL31 family. Type A subfamily. Part of the 50S ribosomal subunit.

Binds the 23S rRNA. The sequence is that of Large ribosomal subunit protein bL31 (rpmE) from Fusobacterium nucleatum subsp. nucleatum (strain ATCC 25586 / DSM 15643 / BCRC 10681 / CIP 101130 / JCM 8532 / KCTC 2640 / LMG 13131 / VPI 4355).